The primary structure comprises 368 residues: MTGNADSGKIATEKDPRKLVFTKLEVSPVFRESPVKELPLFPPISREHSEAKDKTDEEGITSRKHKGCRCKQSKCLKLYCDCFASGVVCTDCDCVDCHNNSEKCDAREAAMVNVLGRNPNAFSEKALGSLTDNQCKAAPDTKPGLLSRGCKCKRTRCLKKYCECFQANLLCSDNCKCINCKNVSEAFQPPAFSAHNSPQVYRRRRDRELTEWNSCPAPLFSIPDNSIQNALGSPMSCSPKLPYRKKRSLMGYTSTLLPDLGDLCSLLVAASESATTTAEDQNRIFTKPDDKEAIELSSESESRNVEEEIQSRGRLIELIDVQYNGEEDSQCKTKTSVNETDIYMEQERAVLETFRDCLQKFIKSRLES.

The 122-residue stretch at 64 to 185 (KHKGCRCKQS…KCINCKNVSE (122 aa)) folds into the CRC domain.

This sequence belongs to the lin-54 family.

It localises to the nucleus. Plays a role in development of both male and female reproductive tissues. The chain is Protein tesmin/TSO1-like CXC 8 (TCX8) from Arabidopsis thaliana (Mouse-ear cress).